We begin with the raw amino-acid sequence, 107 residues long: Cytochrome c oxidase assembly protein COX16 homolog, mitochondrial (107 aa).

Topologically, residues 1 to 14 (MFGYAVRRALRKSK) are mitochondrial matrix. Residues 15 to 37 (TLRYGVPMLLLIVGGSFGLREFS) traverse the membrane as a helical segment. Residues 38–107 (QIRYDAVKIK…PEILKTNKTT (70 aa)) lie on the Mitochondrial intermembrane side of the membrane. The interval 80–107 (NIRGPRPWEDPDLLQGRNPEILKTNKTT) is disordered.

It belongs to the COX16 family. As to quaternary structure, associates with the MITRAC complex. Interacts with MT-CO2/COX; specifically interacts with newly synthesized MT-CO2/COX. Interacts with SCO1, SCO2 and COA6.

The protein localises to the mitochondrion inner membrane. Required for the assembly of the mitochondrial respiratory chain complex IV (CIV), also known as cytochrome c oxidase. Promotes the insertion of copper into the active site of cytochrome c oxidase subunit II (MT-CO2/COX2). Interacts specifically with newly synthesized MT-CO2/COX and its copper center-forming metallochaperones SCO1, SCO2 and COA6. Probably facilitates MT-CO2/COX2 association with the MITRAC assembly intermediate containing MT-CO1/COX1, thereby participating in merging the MT-CO1/COX1 and MT-CO2/COX2 assembly lines. This is Cytochrome c oxidase assembly protein COX16 homolog, mitochondrial from Bos taurus (Bovine).